The following is a 67-amino-acid chain: Large ribosomal subunit protein bL35 (67 aa).

It belongs to the bacterial ribosomal protein bL35 family.

The chain is Large ribosomal subunit protein bL35 from Sinorhizobium medicae (strain WSM419) (Ensifer medicae).